A 448-amino-acid polypeptide reads, in one-letter code: MSQSTATYINVIGAGLAGSEAAYQIAKRGIPVKLYEMRGVKATPQHKTTNFAELVCSNSFRGDSLTNAVGLLKEEMRRLDSIIMRNGEANRVPAGGAMAVDREGYAKSVTAELENHPLIEVIRDEITEIPDDAITVIATGPLTSDALAEKIHALNGGDGFYFYDAAAPIIDKSTIDMSKVYLKSRYDKGEAAYLNCPMTKEEFMAFHDALTNAEEAPLNAFEKEKYFEGCMPIEVMAKRGIKTMLYGPMKPVGLEYPDDYTGPRDGEFKTPYAVVQLRQDNAAGSLYNIVGFQTHLKWGEQKRVFQMIPGLENAEFVRYGVMHRNSYMDSPNLLTETFQSRNNPNLFFAGQMTGVEGYVESAASGLVAGTNAARLFKREEALVFPQTTAIGSLPHYVTHADSKHFQPMNVNFGIIKELEGPRIRDKKERYEAIASRALADLDTCLASL.

13–18 (GAGLAG) serves as a coordination point for FAD.

Belongs to the MnmG family. TrmFO subfamily. The cofactor is FAD.

Its subcellular location is the cytoplasm. It carries out the reaction uridine(54) in tRNA + (6R)-5,10-methylene-5,6,7,8-tetrahydrofolate + NADH + H(+) = 5-methyluridine(54) in tRNA + (6S)-5,6,7,8-tetrahydrofolate + NAD(+). It catalyses the reaction uridine(54) in tRNA + (6R)-5,10-methylene-5,6,7,8-tetrahydrofolate + NADPH + H(+) = 5-methyluridine(54) in tRNA + (6S)-5,6,7,8-tetrahydrofolate + NADP(+). Catalyzes the folate-dependent formation of 5-methyl-uridine at position 54 (M-5-U54) in all tRNAs. The chain is Methylenetetrahydrofolate--tRNA-(uracil-5-)-methyltransferase TrmFO from Streptococcus pyogenes serotype M28 (strain MGAS6180).